We begin with the raw amino-acid sequence, 320 residues long: MKFPYTRMRRLRKNSKIRSLVKETTLSKDDLIYPVFVKEGIKTKEKIPKMPGQYRYSVDELIDEAKKLEEKGLKAILVFGIPKKKDKYGSSAYDPNGIVQKSVKLLKEETDLVVITDVCLCQYTEHGHCGIVKNKKIVNDETLKYLSKVALSHAEAGADVVAPSDMMDGRVKAIREELEKNGFDDVIIMSYSAKYASSFYEPFRSAVYSSPAFGDRSTYQMDPPNSLEALREVKLDIDEGADIVMVKPALPYLDIIRLVKDTFGVPTAAYNVSGEYSMIKAAIDANYLSNKVIIETLLSIKRAGADLIITHFAPEIVEEI.

Zn(2+) contacts are provided by cysteine 119, cysteine 121, and cysteine 129. Catalysis depends on lysine 194, which acts as the Schiff-base intermediate with substrate. Residues arginine 204 and arginine 216 each contribute to the 5-aminolevulinate site. Glutamate 232 contacts Mg(2+). Lysine 247 serves as the catalytic Schiff-base intermediate with substrate. Serine 273 lines the 5-aminolevulinate pocket.

It belongs to the ALAD family. As to quaternary structure, homooctamer. Requires Zn(2+) as cofactor.

The catalysed reaction is 2 5-aminolevulinate = porphobilinogen + 2 H2O + H(+). It functions in the pathway porphyrin-containing compound metabolism; protoporphyrin-IX biosynthesis; coproporphyrinogen-III from 5-aminolevulinate: step 1/4. In terms of biological role, catalyzes an early step in the biosynthesis of tetrapyrroles. Binds two molecules of 5-aminolevulinate per subunit, each at a distinct site, and catalyzes their condensation to form porphobilinogen. The chain is Delta-aminolevulinic acid dehydratase (hemB) from Methanothermus sociabilis.